Here is a 553-residue protein sequence, read N- to C-terminus: Formate--tetrahydrofolate ligase 2 (553 aa).

63–70 (TSAGEGKS) provides a ligand contact to ATP.

The protein belongs to the formate--tetrahydrofolate ligase family.

The enzyme catalyses (6S)-5,6,7,8-tetrahydrofolate + formate + ATP = (6R)-10-formyltetrahydrofolate + ADP + phosphate. It participates in one-carbon metabolism; tetrahydrofolate interconversion. The sequence is that of Formate--tetrahydrofolate ligase 2 from Lactobacillus acidophilus (strain ATCC 700396 / NCK56 / N2 / NCFM).